Reading from the N-terminus, the 60-residue chain is Large ribosomal subunit protein uL30 (60 aa).

The protein belongs to the universal ribosomal protein uL30 family. As to quaternary structure, part of the 50S ribosomal subunit.

This is Large ribosomal subunit protein uL30 from Histophilus somni (strain 2336) (Haemophilus somnus).